A 205-amino-acid chain; its full sequence is Dr1-associated corepressor (205 aa).

The Histone-fold domain maps to 14 to 77; that stretch reads PARIKKIMQT…SHLKQCIELE (64 aa). The tract at residues 91–205 is disordered; the sequence is PDMQGDGEDN…EAEDEEDYDS (115 aa). The segment covering 98-108 has biased composition (basic and acidic residues); sequence EDNHTDGDKGP. A compositionally biased stretch (acidic residues) spans 138-155; the sequence is SEQEDESEDTDTDGEEET. Residues 172–193 are compositionally biased toward pro residues; the sequence is PPTPFMPFTSPLPLPPAPPGPS. Residues 196–205 show a composition bias toward acidic residues; the sequence is EAEDEEDYDS.

It belongs to the NC2 alpha/DRAP1 family. Heterodimer with DR1. Binds BTAF1. Post-translationally, phosphorylation reduces DNA binding, but has no effect on heterodimerization and TBP binding.

Its subcellular location is the nucleus. In terms of biological role, the association of the DR1/DRAP1 heterodimer with TBP results in a functional repression of both activated and basal transcription of class II genes. This interaction precludes the formation of a transcription-competent complex by inhibiting the association of TFIIA and/or TFIIB with TBP. Can bind to DNA on its own. The chain is Dr1-associated corepressor from Rattus norvegicus (Rat).